The primary structure comprises 276 residues: Adenylate kinase (276 aa).

52–57 (GAGKGT) is a binding site for ATP. An NMP region spans residues 72–101 (ATGDMLRAQVAAKTPLGREAKKIMDAGGLV). Residues Thr-73, Arg-78, 99 to 101 (GLV), 128 to 131 (GFPR), and Gln-135 each bind AMP. Residues 169 to 206 (GRLVHPASGRSYHKIFNPPKAPMTDDVTGEPLIQRSDD) form an LID region. Residues Arg-170 and 179 to 180 (SY) each bind ATP. AMP contacts are provided by Arg-203 and Arg-214. Gln-242 provides a ligand contact to ATP.

It belongs to the adenylate kinase family. AK2 subfamily. In terms of assembly, monomer.

The protein resides in the cytoplasm. It localises to the cytosol. The protein localises to the mitochondrion intermembrane space. The enzyme catalyses AMP + ATP = 2 ADP. Catalyzes the reversible transfer of the terminal phosphate group between ATP and AMP. Plays an important role in cellular energy homeostasis and in adenine nucleotide metabolism. Adenylate kinase activity is critical for regulation of the phosphate utilization and the AMP de novo biosynthesis pathways. This is Adenylate kinase (adk1) from Pyrenophora tritici-repentis (strain Pt-1C-BFP) (Wheat tan spot fungus).